Consider the following 96-residue polypeptide: Methanol dehydrogenase [cytochrome c] subunit 2 (96 aa).

The first 22 residues, 1–22, serve as a signal peptide directing secretion; that stretch reads MKTTLIAAAIVALSGLAAPALA. The cysteines at positions 28 and 34 are disulfide-linked. Residues 45–75 form a disordered region; sequence IAGSKYDPKHDPKELNKQADSIKQMEERNKK. Positions 50–61 are enriched in basic and acidic residues; the sequence is YDPKHDPKELNK.

Belongs to the methanol dehydrogenase subunit 2 family. Heterotetramer composed of 2 alpha and 2 beta subunits.

It localises to the periplasm. The enzyme catalyses 2 Fe(III)-[cytochrome cL] + a primary alcohol = 2 Fe(II)-[cytochrome cL] + an aldehyde + 2 H(+). Functionally, catalyzes the oxidation of primary alcohols including methanol. This is Methanol dehydrogenase [cytochrome c] subunit 2 (moxI) from Methylorubrum extorquens (strain ATCC 14718 / DSM 1338 / JCM 2805 / NCIMB 9133 / AM1) (Methylobacterium extorquens).